Here is a 61-residue protein sequence, read N- to C-terminus: Small ribosomal subunit protein uS14 (61 aa).

C24, C27, C40, and C43 together coordinate Zn(2+).

Belongs to the universal ribosomal protein uS14 family. Zinc-binding uS14 subfamily. In terms of assembly, part of the 30S ribosomal subunit. Contacts proteins S3 and S10. It depends on Zn(2+) as a cofactor.

Its function is as follows. Binds 16S rRNA, required for the assembly of 30S particles and may also be responsible for determining the conformation of the 16S rRNA at the A site. The polypeptide is Small ribosomal subunit protein uS14 (Bifidobacterium longum (strain DJO10A)).